The sequence spans 361 residues: D-alanine--D-alanine ligase (361 aa).

An ATP-grasp domain is found at 134 to 344 (KLLLKSFDIP…FKDLVDNLID (211 aa)). 167-222 (KEVLGYPVIVKPAVLGSSIGINVAYSENQIESFIKEALKYDLTIVIEKFIEAREIE) serves as a coordination point for ATP. Positions 297, 311, and 313 each coordinate Mg(2+).

Belongs to the D-alanine--D-alanine ligase family. It depends on Mg(2+) as a cofactor. The cofactor is Mn(2+).

Its subcellular location is the cytoplasm. The catalysed reaction is 2 D-alanine + ATP = D-alanyl-D-alanine + ADP + phosphate + H(+). It participates in cell wall biogenesis; peptidoglycan biosynthesis. In terms of biological role, cell wall formation. In Borreliella burgdorferi (strain ZS7) (Borrelia burgdorferi), this protein is D-alanine--D-alanine ligase.